The primary structure comprises 198 residues: Recombination protein RecR (198 aa).

A C4-type zinc finger spans residues 57–72; it reads CEKCNTFTEAQICEVC. The Toprim domain maps to 80-175; it reads TLLCVVETPA…SVTRLARGVP (96 aa).

This sequence belongs to the RecR family.

May play a role in DNA repair. It seems to be involved in an RecBC-independent recombinational process of DNA repair. It may act with RecF and RecO. The chain is Recombination protein RecR from Paraburkholderia phymatum (strain DSM 17167 / CIP 108236 / LMG 21445 / STM815) (Burkholderia phymatum).